The primary structure comprises 102 residues: Large ribosomal subunit protein bL21 (102 aa).

Belongs to the bacterial ribosomal protein bL21 family. In terms of assembly, part of the 50S ribosomal subunit. Contacts protein L20.

In terms of biological role, this protein binds to 23S rRNA in the presence of protein L20. This is Large ribosomal subunit protein bL21 from Geobacillus thermodenitrificans (strain NG80-2).